Here is a 79-residue protein sequence, read N- to C-terminus: Small ribosomal subunit protein bS18B (79 aa).

Belongs to the bacterial ribosomal protein bS18 family. Part of the 30S ribosomal subunit. Forms a tight heterodimer with protein bS6.

Binds as a heterodimer with protein bS6 to the central domain of the 16S rRNA, where it helps stabilize the platform of the 30S subunit. This chain is Small ribosomal subunit protein bS18B, found in Mycolicibacterium gilvum (strain PYR-GCK) (Mycobacterium gilvum (strain PYR-GCK)).